The following is a 521-amino-acid chain: Probable rhamnogalacturonase B (521 aa).

The first 21 residues, 1–21 (MRLHAFTLLSLLGLVPSFAAA), serve as a signal peptide directing secretion. Cysteines 42 and 68 form a disulfide. N-linked (GlcNAc...) asparagine glycosylation occurs at N145. Catalysis depends on D219, which acts as the Proton donor. A disulfide bond links C221 and C238. The N-linked (GlcNAc...) asparagine glycan is linked to N239. H294 is an active-site residue. N-linked (GlcNAc...) asparagine glycosylation is present at N321. 2 disulfide bridges follow: C344/C350 and C372/C381. The tract at residues 462–521 (ETPAAASRSEQVVQGAPQETGQSAPESAGPVPSGNPGPVPTGGSRPSRHRHGHHHFGSAI) is disordered. Residues 469-486 (RSEQVVQGAPQETGQSAP) are compositionally biased toward polar residues. A compositionally biased stretch (basic residues) spans 507–521 (PSRHRHGHHHFGSAI).

It belongs to the glycosyl hydrolase 28 family.

The protein resides in the secreted. The enzyme catalyses Endohydrolysis of alpha-D-GalA-(1-&gt;2)-alpha-L-Rha glycosidic bond in the rhamnogalacturonan I backbone with initial inversion of anomeric configuration releasing oligosaccharides with beta-D-GalA at the reducing end.. Its function is as follows. Pectinolytic enzymes consist of four classes of enzymes: pectine lyase, polygalacturonase, pectin methylesterase and rhamnogalacturonase. Hydrolyzes alpha-D-galacturonopyranosyl-(1,2)-alpha-L-rhamnopyranosyl linkages in the backbone of the hairy regions of pectins. This chain is Probable rhamnogalacturonase B (rhgB), found in Aspergillus fumigatus (strain CBS 144.89 / FGSC A1163 / CEA10) (Neosartorya fumigata).